The primary structure comprises 88 residues: MGTARFLRAVLLLSVLLMVTFPALLSAEHHDGRVDICRLPSDSGECSRFFGMWYFDGTTCTKFVYGGYGGNDNRFPTEKACMKRCAKA.

An N-terminal signal peptide occupies residues 1 to 27 (MGTARFLRAVLLLSVLLMVTFPALLSA). A propeptide spanning residues 28–33 (EHHDGR) is cleaved from the precursor. A BPTI/Kunitz inhibitor domain is found at 37–85 (CRLPSDSGECSRFFGMWYFDGTTCTKFVYGGYGGNDNRFPTEKACMKRC). 2 disulfide bridges follow: Cys-37-Cys-85 and Cys-60-Cys-81.

The protein belongs to the venom Kunitz-type family. 03 (sub-Kunitz) subfamily. Expressed by the venom gland.

Its subcellular location is the secreted. In terms of biological role, serine protease inhibitor that inhibits trypsin at a molar ratio of 1:1. The polypeptide is Kunitz-type U15-theraphotoxin-Hhn1d (Cyriopagopus hainanus (Chinese bird spider)).